Reading from the N-terminus, the 344-residue chain is Chalcone synthase A (344 aa).

Residue C167 is part of the active site.

This sequence belongs to the thiolase-like superfamily. Chalcone/stilbene synthases family.

It carries out the reaction (E)-4-coumaroyl-CoA + 3 malonyl-CoA + 3 H(+) = 2',4,4',6'-tetrahydroxychalcone + 3 CO2 + 4 CoA. It participates in secondary metabolite biosynthesis; flavonoid biosynthesis. Functionally, the primary product of this enzyme is 4,2',4',6'-tetrahydroxychalcone (also termed naringenin-chalcone or chalcone) which can under specific conditions spontaneously isomerize into naringenin. The polypeptide is Chalcone synthase A (CHSA) (Ipomoea nil (Japanese morning glory)).